A 370-amino-acid polypeptide reads, in one-letter code: 3-isopropylmalate dehydrogenase (370 aa).

77–90 (GPKWDSVPYEVRPE) is an NAD(+) binding site. The substrate site is built by Arg97, Arg107, Arg135, and Asp226. Residues Asp226, Asp250, and Asp254 each contribute to the Mg(2+) site. 290–302 (GSAPDIAGQGLAN) serves as a coordination point for NAD(+).

It belongs to the isocitrate and isopropylmalate dehydrogenases family. LeuB type 1 subfamily. As to quaternary structure, homodimer. Mg(2+) is required as a cofactor. Mn(2+) serves as cofactor.

It localises to the cytoplasm. The catalysed reaction is (2R,3S)-3-isopropylmalate + NAD(+) = 4-methyl-2-oxopentanoate + CO2 + NADH. It functions in the pathway amino-acid biosynthesis; L-leucine biosynthesis; L-leucine from 3-methyl-2-oxobutanoate: step 3/4. Catalyzes the oxidation of 3-carboxy-2-hydroxy-4-methylpentanoate (3-isopropylmalate) to 3-carboxy-4-methyl-2-oxopentanoate. The product decarboxylates to 4-methyl-2 oxopentanoate. This Nitrobacter winogradskyi (strain ATCC 25391 / DSM 10237 / CIP 104748 / NCIMB 11846 / Nb-255) protein is 3-isopropylmalate dehydrogenase.